Here is a 394-residue protein sequence, read N- to C-terminus: Succinate--CoA ligase [ADP-forming] subunit beta (394 aa).

ATP-binding positions include lysine 46, 53–55 (GRG), glutamate 99, cysteine 102, and glutamate 107. Residues asparagine 199 and aspartate 213 each coordinate Mg(2+). Substrate contacts are provided by residues asparagine 264 and 321–323 (GIV).

The protein belongs to the succinate/malate CoA ligase beta subunit family. As to quaternary structure, heterotetramer of two alpha and two beta subunits. Mg(2+) is required as a cofactor.

It carries out the reaction succinate + ATP + CoA = succinyl-CoA + ADP + phosphate. It catalyses the reaction GTP + succinate + CoA = succinyl-CoA + GDP + phosphate. The protein operates within carbohydrate metabolism; tricarboxylic acid cycle; succinate from succinyl-CoA (ligase route): step 1/1. In terms of biological role, succinyl-CoA synthetase functions in the citric acid cycle (TCA), coupling the hydrolysis of succinyl-CoA to the synthesis of either ATP or GTP and thus represents the only step of substrate-level phosphorylation in the TCA. The beta subunit provides nucleotide specificity of the enzyme and binds the substrate succinate, while the binding sites for coenzyme A and phosphate are found in the alpha subunit. This is Succinate--CoA ligase [ADP-forming] subunit beta from Haemophilus influenzae (strain PittGG).